The following is a 209-amino-acid chain: Abscisic acid receptor PYL5 (209 aa).

Residues 44-196 (HAPGEHQCSS…NLTSLAEVSE (153 aa)) are START-like. C51 and C177 are joined by a disulfide. Abscisate contacts are provided by residues K80, 109–114 (ATTSTE), 136–142 (RLRNYSS), and E161. Residues 105 to 109 (TGLPA) carry the Gate loop motif. Residues 135–137 (HRL) carry the Latch loop motif.

The protein belongs to the PYR/PYL/RCAR abscisic acid intracellular receptor family. In terms of assembly, monomer. Interacts with PP2C30. Binding to PP2C30 is dependent on the presence of abscisic acid (ABA). Interacts with PP2C51. Binding to PP2C51 is dependent on the presence of ABA. Interacts with PP2C50. Binding to PP2C50 is dependent on the presence of ABA. Interacts with PP2C53. Expressed in leaf sheaths and leaf blades. Expressed at low levels in roots, flowers and seeds.

The protein localises to the nucleus. It localises to the cytoplasm. Its subcellular location is the cytosol. Intracellular abscisic acid (ABA) receptor that functions as a positive regulator of ABA signaling pathway. Together with ABI5, PP2C30 and SAPK2, is part of an ABA signaling unit that modulates seed germination and early seedling growth. Acts as a positive regulator of abiotic stress-responsive gene expression. Inhibits the protein phosphatases PP2C06 and PP2C09 when activated by ABA. This chain is Abscisic acid receptor PYL5, found in Oryza sativa subsp. japonica (Rice).